A 242-amino-acid chain; its full sequence is Uridylate kinase (242 aa).

Lys15–Gly18 is an ATP binding site. Gly57 lines the UMP pocket. ATP contacts are provided by Gly58 and Arg62. UMP contacts are provided by residues Asp78 and Thr139 to Thr146. ATP is bound by residues Thr166, Tyr172, and Asp175.

The protein belongs to the UMP kinase family. As to quaternary structure, homohexamer.

The protein resides in the cytoplasm. The catalysed reaction is UMP + ATP = UDP + ADP. The protein operates within pyrimidine metabolism; CTP biosynthesis via de novo pathway; UDP from UMP (UMPK route): step 1/1. With respect to regulation, inhibited by UTP. Catalyzes the reversible phosphorylation of UMP to UDP. This chain is Uridylate kinase, found in Acinetobacter baylyi (strain ATCC 33305 / BD413 / ADP1).